Consider the following 259-residue polypeptide: Ribosomal RNA small subunit methyltransferase A (259 aa).

S-adenosyl-L-methionine is bound by residues N15, L17, G41, E62, D86, and N105.

This sequence belongs to the class I-like SAM-binding methyltransferase superfamily. rRNA adenine N(6)-methyltransferase family. RsmA subfamily.

The protein localises to the cytoplasm. It carries out the reaction adenosine(1518)/adenosine(1519) in 16S rRNA + 4 S-adenosyl-L-methionine = N(6)-dimethyladenosine(1518)/N(6)-dimethyladenosine(1519) in 16S rRNA + 4 S-adenosyl-L-homocysteine + 4 H(+). Specifically dimethylates two adjacent adenosines (A1518 and A1519) in the loop of a conserved hairpin near the 3'-end of 16S rRNA in the 30S particle. May play a critical role in biogenesis of 30S subunits. This is Ribosomal RNA small subunit methyltransferase A from Mycoplasmopsis synoviae (strain 53) (Mycoplasma synoviae).